Consider the following 234-residue polypeptide: Acetylxylan esterase 2 (234 aa).

The N-terminal stretch at 1-17 (MHSKFFAASLLGLGAAA) is a signal peptide. A propeptide spanning residues 18–27 (IPLEGVMEKR) is cleaved from the precursor. 2 disulfides stabilise this stretch: Cys-29/Cys-106 and Cys-73/Cys-79. Ser-117 is an active-site residue. Disulfide bonds link Cys-128-Cys-188, Cys-174-Cys-206, and Cys-198-Cys-205. Asp-202 is an active-site residue. A glycan (N-linked (GlcNAc...) asparagine) is linked at Asn-207. The active site involves His-214.

The protein belongs to the cutinase family. Acetylxylan esterase subfamily. As to quaternary structure, monomer.

Its subcellular location is the secreted. It carries out the reaction Deacetylation of xylans and xylo-oligosaccharides.. It participates in glycan degradation; xylan degradation. Functionally, degrades acetylated xylans by cleaving acetyl side groups from the hetero-xylan backbone. The polypeptide is Acetylxylan esterase 2 (axe-2) (Talaromyces purpureogenus (Soft rot fungus)).